The primary structure comprises 465 residues: MLITRFAPSPTGDLHIGGVRTALFSWLVAKQKGGEFRLRIEDTDLERSTEASTQVILKGMEWLGLDYQGEVIYQSRRTDIYNAVIDDMIAQGLAYYCWCTPEELEEMRAAQKARGEKPRYNGKYRNGGEPVDGVTPVVRFKNPLEGTVSWHDHVRGVVTIDNSELDDFIIRRSDGMPTYNFCVVIDDHAQDIGLVIRGDDHVSNTPRQINLYRALGYQVPEFAHVPMILGDDGKRLSKRHGATNVLDYQKEGYLPEAIINYLVRLGWAYGDQEIFSIEELLTHFSIDDVHSAPSTFNTEKLRWLNQQYLMHTDIKELARLLPDFCAAQGYQLTQEQLLTVVPHYQERAKTLREMAEMMRWVACAPETFPEAAAKKAFKNDTAQIMQLLITKLQALQDFDEKTVHDALAAVVSELNIGFGKMGQPARLAITGGLPSPDLALCFALIGKENALQRLQYAIKFMTQNQ.

A 'HIGH' region motif is present at residues 8–18; sequence PSPTGDLHIGG. Positions 235–239 match the 'KMSKS' region motif; sequence RLSKR. An ATP-binding site is contributed by Lys-238.

This sequence belongs to the class-I aminoacyl-tRNA synthetase family. Glutamate--tRNA ligase type 1 subfamily. Monomer.

The protein localises to the cytoplasm. It carries out the reaction tRNA(Glu) + L-glutamate + ATP = L-glutamyl-tRNA(Glu) + AMP + diphosphate. Its function is as follows. Catalyzes the attachment of glutamate to tRNA(Glu) in a two-step reaction: glutamate is first activated by ATP to form Glu-AMP and then transferred to the acceptor end of tRNA(Glu). In Dichelobacter nodosus (strain VCS1703A), this protein is Glutamate--tRNA ligase.